The primary structure comprises 232 residues: Clarin-2 (232 aa).

Residues 10–30 traverse the membrane as a helical segment; the sequence is YGLASLLSFSSFILIIVALVV. A glycan (N-linked (GlcNAc...) asparagine) is linked at Asn48. 3 helical membrane-spanning segments follow: residues 101–121, 139–159, and 188–208; these read ILLL…FAIL, LWNV…VAAV, and SFWI…VVAI.

The protein belongs to the clarin family.

It is found in the cell projection. Its subcellular location is the stereocilium membrane. In terms of biological role, plays a key role to hearing function. Required for normal organization and maintenance of the stereocilia bundle and for mechano-electrical transduction. The sequence is that of Clarin-2 from Homo sapiens (Human).